We begin with the raw amino-acid sequence, 508 residues long: Anaerobic nitric oxide reductase transcription regulator NorR (508 aa).

D56 carries the post-translational modification 4-aspartylphosphate. Residues 186-415 (MIGQSPAMAR…LEHAIHRAAV (230 aa)) enclose the Sigma-54 factor interaction domain. ATP-binding positions include 214 to 221 (GETGVGKE) and 277 to 286 (ADQGTLFLDE). Residues 483–502 (WAATARALELDSGNLHRLAK) constitute a DNA-binding region (H-T-H motif).

Its pathway is nitrogen metabolism; nitric oxide reduction. Functionally, required for the expression of anaerobic nitric oxide (NO) reductase, acts as a transcriptional activator for at least the norVW operon. Activation also requires sigma-54. This chain is Anaerobic nitric oxide reductase transcription regulator NorR, found in Aeromonas hydrophila subsp. hydrophila (strain ATCC 7966 / DSM 30187 / BCRC 13018 / CCUG 14551 / JCM 1027 / KCTC 2358 / NCIMB 9240 / NCTC 8049).